Here is a 215-residue protein sequence, read N- to C-terminus: 3-demethoxyubiquinol 3-hydroxylase (215 aa).

Fe cation is bound by residues glutamate 64, glutamate 94, histidine 97, glutamate 146, glutamate 178, and histidine 181.

The protein belongs to the COQ7 family. Fe cation serves as cofactor.

The protein localises to the cell membrane. The catalysed reaction is a 5-methoxy-2-methyl-3-(all-trans-polyprenyl)benzene-1,4-diol + AH2 + O2 = a 3-demethylubiquinol + A + H2O. Its pathway is cofactor biosynthesis; ubiquinone biosynthesis. In terms of biological role, catalyzes the hydroxylation of 2-nonaprenyl-3-methyl-6-methoxy-1,4-benzoquinol during ubiquinone biosynthesis. In Pseudomonas aeruginosa (strain LESB58), this protein is 3-demethoxyubiquinol 3-hydroxylase.